The chain runs to 153 residues: Movement protein (153 aa).

A disordered region spans residues 107–153 (SSSARPLPQQPAPSLTSWTPIAKHLHSHQQSISSQSPKLVRGASQRR).

Belongs to the luteoviruses movement protein family.

Transports viral genome to neighboring plant cells directly through plasmosdesmata, without any budding. The movement protein allows efficient cell to cell propagation, by bypassing the host cell wall barrier. This Avena byzantina (Oat) protein is Movement protein.